Here is a 903-residue protein sequence, read N- to C-terminus: Protein translocase subunit SecA (903 aa).

ATP-binding positions include glutamine 87, 105–109 (GEGKT), and aspartate 494. Positions 861–883 (SGSQGAAPRQPVRAEGKKVGRND) are disordered. The segment covering 872–881 (VRAEGKKVGR) has biased composition (basic and acidic residues). Cysteine 885, cysteine 887, cysteine 896, and cysteine 897 together coordinate Zn(2+).

The protein belongs to the SecA family. As to quaternary structure, monomer and homodimer. Part of the essential Sec protein translocation apparatus which comprises SecA, SecYEG and auxiliary proteins SecDF. Other proteins may also be involved. Requires Zn(2+) as cofactor.

The protein localises to the cell membrane. The protein resides in the cytoplasm. It carries out the reaction ATP + H2O + cellular proteinSide 1 = ADP + phosphate + cellular proteinSide 2.. Part of the Sec protein translocase complex. Interacts with the SecYEG preprotein conducting channel. Has a central role in coupling the hydrolysis of ATP to the transfer of proteins into and across the cell membrane, serving as an ATP-driven molecular motor driving the stepwise translocation of polypeptide chains across the membrane. This Symbiobacterium thermophilum (strain DSM 24528 / JCM 14929 / IAM 14863 / T) protein is Protein translocase subunit SecA.